A 513-amino-acid polypeptide reads, in one-letter code: Glycogen synthase (513 aa).

ADP-alpha-D-glucose is bound at residue K47.

Belongs to the glycosyltransferase 1 family. Bacterial/plant glycogen synthase subfamily.

The enzyme catalyses [(1-&gt;4)-alpha-D-glucosyl](n) + ADP-alpha-D-glucose = [(1-&gt;4)-alpha-D-glucosyl](n+1) + ADP + H(+). It functions in the pathway glycan biosynthesis; glycogen biosynthesis. Functionally, synthesizes alpha-1,4-glucan chains using ADP-glucose. This is Glycogen synthase from Pseudomonas paraeruginosa (strain DSM 24068 / PA7) (Pseudomonas aeruginosa (strain PA7)).